A 70-amino-acid polypeptide reads, in one-letter code: MRGGGKKNASNVEPLRATRPCAECGRPSVREHYPFCSERCRNVDLNRWLSGSYAIPVADDESKADDEDER.

C21, C24, C36, and C40 together coordinate Zn(2+).

The protein belongs to the DNA gyrase inhibitor YacG family. Interacts with GyrB. It depends on Zn(2+) as a cofactor.

In terms of biological role, inhibits all the catalytic activities of DNA gyrase by preventing its interaction with DNA. Acts by binding directly to the C-terminal domain of GyrB, which probably disrupts DNA binding by the gyrase. The protein is DNA gyrase inhibitor YacG of Sinorhizobium medicae (strain WSM419) (Ensifer medicae).